The following is a 138-amino-acid chain: Putative pre-16S rRNA nuclease (138 aa).

This sequence belongs to the YqgF nuclease family.

The protein localises to the cytoplasm. Could be a nuclease involved in processing of the 5'-end of pre-16S rRNA. The sequence is that of Putative pre-16S rRNA nuclease from Clostridium tetani (strain Massachusetts / E88).